The chain runs to 521 residues: Probable protein kinase UbiB (521 aa).

The Protein kinase domain maps to 119–497 (SFDRQPVASA…QKRTNRLLQS (379 aa)). Residues 125–133 (VASASIAQV) and lysine 151 each bind ATP. Aspartate 286 (proton acceptor) is an active-site residue. A helical membrane pass occupies residues 496-516 (QSLIYGGLGFVLGLLVMQLFV).

The protein belongs to the ABC1 family. UbiB subfamily.

It is found in the cell inner membrane. It functions in the pathway cofactor biosynthesis; ubiquinone biosynthesis [regulation]. Functionally, is probably a protein kinase regulator of UbiI activity which is involved in aerobic coenzyme Q (ubiquinone) biosynthesis. This chain is Probable protein kinase UbiB, found in Acidovorax sp. (strain JS42).